We begin with the raw amino-acid sequence, 443 residues long: Protein Z-dependent protease inhibitor (443 aa).

The first 23 residues, 1-23 (MKVVPSLLLSVLLAQVWLVPGLA), serve as a signal peptide directing secretion. The interval 24–66 (PSPQSPETPAPQNQTSRVVQAPREEEEDEQEASEEKAGDEEKA) is disordered. N-linked (GlcNAc...) asparagine glycosylation is present at asparagine 36. Position 56 is a phosphoserine (serine 56). Basic and acidic residues predominate over residues 56–66 (SEEKAGDEEKA). The heparin-binding stretch occupies residues 136 to 153 (TKPGLLPSLFKGLRETLS). Residues asparagine 180 and asparagine 295 are each glycosylated (N-linked (GlcNAc...) asparagine).

It belongs to the serpin family. Phosphorylated by FAM20C in the extracellular medium.

The protein resides in the secreted. Functionally, inhibits activity of the coagulation protease factor Xa in the presence of PROZ, calcium and phospholipids. Also inhibits factor XIa in the absence of cofactors. This is Protein Z-dependent protease inhibitor (SERPINA10) from Pongo abelii (Sumatran orangutan).